A 573-amino-acid chain; its full sequence is DNA polymerase lambda (573 aa).

The region spanning 35–131 (EARGWLSSLR…RLTDTEGFSL (97 aa)) is the BRCT domain. Disordered regions lie at residues 126-204 (TEGF…GPQV) and 214-233 (TGHY…APEA). Positions 263–277 (KAYSVQGDKWRALGY) are DNA-binding. The Schiff-base intermediate with DNA role is filled by lysine 310. Residues 343-346 (GTKT) are DNA-binding. DCTP contacts are provided by residues arginine 384, 415-418 (SYRR), and 424-427 (GDVD). The segment at 418 to 427 (RGKMTCGDVD) is involved in primer binding. Mn(2+) is bound by residues aspartate 425, aspartate 427, and aspartate 488. Positions 464 to 503 (ENGQQQKYLGVCRLPGPGKRHRRLDIIVVPYCEFACALLY) are DNA-binding. Residue asparagine 511 participates in dCTP binding.

The protein belongs to the DNA polymerase type-X family. As to quaternary structure, interacts with PCNA. Interacts with PAXX; promoting POLL recruitment to double-strand breaks (DSBs) and stimulation of the end-filling activity of POLL. Interacts with XRCC4; promoting POLL recruitment to double-strand breaks (DSBs) and stimulation of the end-filling activity of POLL. Interacts with NHEJ1/XLF; promoting POLL recruitment to double-strand breaks (DSBs) and stimulation of the end-filling activity of POLL. Requires Mn(2+) as cofactor.

It localises to the nucleus. It catalyses the reaction DNA(n) + a 2'-deoxyribonucleoside 5'-triphosphate = DNA(n+1) + diphosphate. DNA polymerase that functions in several pathways of DNA repair. Involved in base excision repair (BER) responsible for repair of lesions that give rise to abasic (AP) sites in DNA. Also contributes to DNA double-strand break repair by non-homologous end joining and homologous recombination. Has both template-dependent and template-independent (terminal transferase) DNA polymerase activities. Also has a 5'-deoxyribose-5-phosphate lyase (dRP lyase) activity. This is DNA polymerase lambda from Mus musculus (Mouse).